The following is a 224-amino-acid chain: MNARIGVITFPGTLDDVDAARAARHVGAEAVSLWHADADLKGVDAVVVPGGFSYGDYLRAGAIARLSPIMTEVVDAVQRGMPVLGICNGFQVLCEAGLLPGALIRNVGLHFICRDVWLRVISTSTAWTSRFEPETDLLVSLKSGEGRYVASENVLDELDGEGRVVFRYHDNINGSLRDIAGISSANGRVVGMMPHPEHAIEVLTGPSDDGLGLFYSALDSVLAS.

The Glutamine amidotransferase type-1 domain occupies 4–224; the sequence is RIGVITFPGT…YSALDSVLAS (221 aa). Cysteine 87 functions as the Nucleophile in the catalytic mechanism. Active-site residues include histidine 195 and glutamate 197.

As to quaternary structure, part of the FGAM synthase complex composed of 1 PurL, 1 PurQ and 2 PurS subunits.

The protein resides in the cytoplasm. The enzyme catalyses N(2)-formyl-N(1)-(5-phospho-beta-D-ribosyl)glycinamide + L-glutamine + ATP + H2O = 2-formamido-N(1)-(5-O-phospho-beta-D-ribosyl)acetamidine + L-glutamate + ADP + phosphate + H(+). The catalysed reaction is L-glutamine + H2O = L-glutamate + NH4(+). It participates in purine metabolism; IMP biosynthesis via de novo pathway; 5-amino-1-(5-phospho-D-ribosyl)imidazole from N(2)-formyl-N(1)-(5-phospho-D-ribosyl)glycinamide: step 1/2. Its function is as follows. Part of the phosphoribosylformylglycinamidine synthase complex involved in the purines biosynthetic pathway. Catalyzes the ATP-dependent conversion of formylglycinamide ribonucleotide (FGAR) and glutamine to yield formylglycinamidine ribonucleotide (FGAM) and glutamate. The FGAM synthase complex is composed of three subunits. PurQ produces an ammonia molecule by converting glutamine to glutamate. PurL transfers the ammonia molecule to FGAR to form FGAM in an ATP-dependent manner. PurS interacts with PurQ and PurL and is thought to assist in the transfer of the ammonia molecule from PurQ to PurL. This chain is Phosphoribosylformylglycinamidine synthase subunit PurQ, found in Mycobacterium leprae (strain TN).